We begin with the raw amino-acid sequence, 277 residues long: Radial spoke head protein 9 homolog (277 aa).

This sequence belongs to the flagellar radial spoke RSP9 family. Component of axonemal radial spoke complexes.

Its subcellular location is the cytoplasm. It is found in the cytoskeleton. It localises to the cilium axoneme. The protein resides in the flagellum axoneme. The protein localises to the cell projection. Its subcellular location is the kinocilium. Functionally, functions as part of axonemal radial spoke complexes that play an important part in the motility of sperm and cilia. Required for motility of olfactory and neural cilia and for the structural integrity of ciliary axonemes in both 9+0 and 9+2 motile cilia. Essential for both the radial spoke head assembly and the central pair microtubule stability in ependymal motile cilia. In Danio rerio (Zebrafish), this protein is Radial spoke head protein 9 homolog (rsph9).